A 567-amino-acid polypeptide reads, in one-letter code: WD repeat-containing protein 20 (567 aa).

N-acetylalanine is present on A2. WD repeat units lie at residues 147–187 (IDKS…GTTA), 216–257 (VGEG…GTMK), 258–297 (SYFGGLLCLCWSPDGKYIVTGGEDDLVTVWSFLDCRVIAR), and 345–389 (STQS…LFPH). Phosphoserine is present on residues S355 and S358. A disordered region spans residues 408–441 (PAGSNGSAVTTPGNSVPPPLPRSNSLPHSAVSNA). Composition is skewed to polar residues over residues 411-421 (SNGSAVTTPGN) and 429-441 (RSNSLPHSAVSNA). 3 positions are modified to phosphoserine: S430, S432, and S463. Residues 468-481 (KERHHEKDRKRNHS) are compositionally biased toward basic residues. The segment at 468 to 493 (KERHHEKDRKRNHSMGHISSKSSDKL) is disordered. The WD 5 repeat unit spans residues 529-566 (IAHERLTVLVFLEDCIVTACQEGFICTWARPGKVSKFQ).

As to quaternary structure, interacts with USP12; promotes translocation of USP12/WDR20 to the plasma membrane. Component of the USP12/WDR20/WDR48 deubiquitinating complex. Interacts with USP46; contributes to the cytoplasmic localization of the USP46/WDR20 complex. Component of the USP12/DMWD/WDR48 deubiquitinating complex.

The protein localises to the cytoplasm. It localises to the nucleus. Functionally, regulator of deubiquitinating complexes. Activates deubiquitinating activity of complexes containing USP12. Anchors at the base of the ubiquitin-contacting loop of USP12 and remotely modulates the catalytic center of the enzyme. Regulates shuttling of complexes containing USP12 between the plasma membrane, cytoplasm and nucleus. This Mus musculus (Mouse) protein is WD repeat-containing protein 20 (Wdr20).